We begin with the raw amino-acid sequence, 1252 residues long: Guanine nucleotide exchange factor SDC25 (1252 aa).

One can recognise an SH3 domain in the interval 26–97 (QPIDVVECTY…PPSFTRSILN (72 aa)). Disordered stretches follow at residues 409-454 (IPAS…DTIW) and 623-648 (LNLDNAKDKKNGSQNTDIQEEEDEYE). A compositionally biased stretch (low complexity) spans 416–428 (TSCSSETSHHSPS). In terms of domain architecture, N-terminal Ras-GEF spans 782 to 914 (SNNRIKGGSK…LLKEVNQKFK (133 aa)). Residues 952–1199 (DPVLFATQLT…YQLSLIIEPK (248 aa)) form the Ras-GEF domain. A disordered region spans residues 1201 to 1252 (RKKVVPNSNSNNKSQEKSRDDQTDEGKTSTKKDRFSKFQLHKTKKKAPKVSK). The segment covering 1214 to 1236 (SQEKSRDDQTDEGKTSTKKDRFS) has biased composition (basic and acidic residues). A compositionally biased stretch (basic residues) spans 1239-1252 (QLHKTKKKAPKVSK).

In terms of biological role, promotes the exchange of Ras-bound GDP by GTP. The sequence is that of Guanine nucleotide exchange factor SDC25 (SDC25) from Saccharomyces cerevisiae (strain YJM789) (Baker's yeast).